Reading from the N-terminus, the 38-residue chain is Antifungal protein 5 (38 aa).

This sequence belongs to the plant LTP family.

In terms of biological role, possesses potent antifungal activity against F.graminearum but not P.infestans. The polypeptide is Antifungal protein 5 (Malva parviflora (Little mallow)).